The sequence spans 91 residues: Small ribosomal subunit protein uS19m (91 aa).

The protein belongs to the universal ribosomal protein uS19 family. Component of the mitochondrial small ribosomal subunit (mt-SSU). Mature yeast 74S mitochondrial ribosomes consist of a small (37S) and a large (54S) subunit. The 37S small subunit contains a 15S ribosomal RNA (15S mt-rRNA) and 34 different proteins. The 54S large subunit contains a 21S rRNA (21S mt-rRNA) and 46 different proteins.

The protein localises to the mitochondrion. Its function is as follows. Component of the mitochondrial ribosome (mitoribosome), a dedicated translation machinery responsible for the synthesis of mitochondrial genome-encoded proteins, including at least some of the essential transmembrane subunits of the mitochondrial respiratory chain. The mitoribosomes are attached to the mitochondrial inner membrane and translation products are cotranslationally integrated into the membrane. This is Small ribosomal subunit protein uS19m (RSM19) from Saccharomyces cerevisiae (strain ATCC 204508 / S288c) (Baker's yeast).